Reading from the N-terminus, the 309-residue chain is Agglutinin (309 aa).

Methionine 1 is modified (N-acetylmethionine). Jacalin-type lectin domains are found at residues 4–148 (FLTV…YVKI) and 163–308 (PRGP…HMEY).

It belongs to the jacalin lectin family.

In terms of biological role, D-mannose/D-glucose-binding lectin. Binds N-linked high-mannose-type glycans. Has a preference for smaller (Man(2)-Man(6)) high-mannose-type glycans to larger (Man(7)-Man(9)) ones. Recognizes both alpha1-6 extended and alpha1-3 extended monoantennary glycans. The addition of alpha1-2Man to the Man-alpha1-3Man-beta branch results in a significant loss of affinity, but beta1-2GlcNAc has some affinity. Has less affinity for biantennary glycans, and affinity is very weak for the biantennary complex-type N-glycans with bisecting GlcNAc. No affinity is observed for tri- and tetra-antennary glycans. Has mitogenic and hemagglutinating activities. The sequence is that of Agglutinin from Castanea crenata (Japanese chestnut).